The chain runs to 689 residues: uncharacterized protein (689 aa).

Disordered stretches follow at residues 121 to 206 (LALK…VDPS), 286 to 305 (ASSNQSAAHPDGNNALPMDN), 322 to 414 (NSYS…SMAH), and 552 to 611 (AAMP…HLSD). The segment covering 133 to 158 (SPNNSIPLMANSCLLSADNSSSSTTS) has biased composition (low complexity). The segment covering 322–380 (NSYSYDRYTPNQPSYLESKPGNHQPSYTSEQPMYSTASVPQQISNGPTAVNGLPMNSYT) has biased composition (polar residues). 2 stretches are compositionally biased toward low complexity: residues 381 to 411 (PHSNHLHSPSPNSNSGPTDSLSAPNSTSSPS) and 560 to 572 (PSAHDSASAPSPH).

The protein resides in the cytoplasm. This is an uncharacterized protein from Schizosaccharomyces pombe (strain 972 / ATCC 24843) (Fission yeast).